Reading from the N-terminus, the 427-residue chain is 4-hydroxy-3-methylbut-2-en-1-yl diphosphate synthase (flavodoxin) (427 aa).

[4Fe-4S] cluster is bound by residues cysteine 300, cysteine 303, cysteine 346, and glutamate 353.

The protein belongs to the IspG family. It depends on [4Fe-4S] cluster as a cofactor.

It carries out the reaction (2E)-4-hydroxy-3-methylbut-2-enyl diphosphate + oxidized [flavodoxin] + H2O + 2 H(+) = 2-C-methyl-D-erythritol 2,4-cyclic diphosphate + reduced [flavodoxin]. The protein operates within isoprenoid biosynthesis; isopentenyl diphosphate biosynthesis via DXP pathway; isopentenyl diphosphate from 1-deoxy-D-xylulose 5-phosphate: step 5/6. Functionally, converts 2C-methyl-D-erythritol 2,4-cyclodiphosphate (ME-2,4cPP) into 1-hydroxy-2-methyl-2-(E)-butenyl 4-diphosphate. This Chromobacterium violaceum (strain ATCC 12472 / DSM 30191 / JCM 1249 / CCUG 213 / NBRC 12614 / NCIMB 9131 / NCTC 9757 / MK) protein is 4-hydroxy-3-methylbut-2-en-1-yl diphosphate synthase (flavodoxin).